The sequence spans 312 residues: MRAEEQSKIREAAAGTIFLLIGTVCFASKSIWIKWAYQMGAEPDAVLLYRQLLAVPLFWLIFLIYRPPMPDGKKKGDLWKACGAGVFCFFLSPLLDFIGLNHVSAMVERILLMSYPLFVFGFTACRDRKMSSIQDLFAVLAVMFGLFLALGGWNAELFQANMIGAVFILLSSAVYAGYLVLSGHLVHQIGGIRLNAYGMTAAGAAMMLYTGIKSAAGMNTPMAAYPLSMYGLFAVIAVVTTVIPFVLMLEGIKRIGAQRAAAISMAGPILTIFYGALFLGERLGLIQVIGCGGVFFVITGMEYRKLKTGKKE.

Transmembrane regions (helical) follow at residues 13 to 33 (AAGT…SIWI), 45 to 65 (AVLL…FLIY), 81 to 101 (ACGA…IGLN), 105 to 125 (AMVE…FTAC), 133 to 153 (IQDL…LGGW), 162 to 182 (MIGA…LVLS), 198 to 218 (GMTA…AAGM), 229 to 249 (MYGL…VLML), 260 to 280 (AAAI…LFLG), and 283 to 303 (LGLI…GMEY). The 131-residue stretch at 173–303 (AVYAGYLVLS…VFFVITGMEY (131 aa)) folds into the EamA domain.

It belongs to the EamA transporter family.

The protein localises to the cell membrane. This is an uncharacterized protein from Bacillus subtilis (strain 168).